A 1038-amino-acid polypeptide reads, in one-letter code: Isoleucine--tRNA ligase (1038 aa).

Positions 47 to 57 (PFATGLPHYGH) match the 'HIGH' region motif. The short motif at 591–595 (KMSKR) is the 'KMSKS' region element. Position 594 (Lys594) interacts with ATP.

This sequence belongs to the class-I aminoacyl-tRNA synthetase family. IleS type 2 subfamily. As to quaternary structure, monomer. It depends on Zn(2+) as a cofactor.

Its subcellular location is the cytoplasm. It catalyses the reaction tRNA(Ile) + L-isoleucine + ATP = L-isoleucyl-tRNA(Ile) + AMP + diphosphate. In terms of biological role, catalyzes the attachment of isoleucine to tRNA(Ile). As IleRS can inadvertently accommodate and process structurally similar amino acids such as valine, to avoid such errors it has two additional distinct tRNA(Ile)-dependent editing activities. One activity is designated as 'pretransfer' editing and involves the hydrolysis of activated Val-AMP. The other activity is designated 'posttransfer' editing and involves deacylation of mischarged Val-tRNA(Ile). This is Isoleucine--tRNA ligase from Protochlamydia amoebophila (strain UWE25).